The primary structure comprises 401 residues: Dual-specificity RNA methyltransferase RlmN (401 aa).

E114 acts as the Proton acceptor in catalysis. Residues 120–365 (DKGRGTLCVS…TMVRRTRGDD (246 aa)) enclose the Radical SAM core domain. C127 and C370 are joined by a disulfide. C134, C138, and C141 together coordinate [4Fe-4S] cluster. Residues 187–188 (GE), S219, 241–243 (SLH), and N327 each bind S-adenosyl-L-methionine. The active-site S-methylcysteine intermediate is the C370.

It belongs to the radical SAM superfamily. RlmN family. The cofactor is [4Fe-4S] cluster.

It is found in the cytoplasm. The enzyme catalyses adenosine(2503) in 23S rRNA + 2 reduced [2Fe-2S]-[ferredoxin] + 2 S-adenosyl-L-methionine = 2-methyladenosine(2503) in 23S rRNA + 5'-deoxyadenosine + L-methionine + 2 oxidized [2Fe-2S]-[ferredoxin] + S-adenosyl-L-homocysteine. The catalysed reaction is adenosine(37) in tRNA + 2 reduced [2Fe-2S]-[ferredoxin] + 2 S-adenosyl-L-methionine = 2-methyladenosine(37) in tRNA + 5'-deoxyadenosine + L-methionine + 2 oxidized [2Fe-2S]-[ferredoxin] + S-adenosyl-L-homocysteine. Specifically methylates position 2 of adenine 2503 in 23S rRNA and position 2 of adenine 37 in tRNAs. m2A2503 modification seems to play a crucial role in the proofreading step occurring at the peptidyl transferase center and thus would serve to optimize ribosomal fidelity. This Xanthomonas axonopodis pv. citri (strain 306) protein is Dual-specificity RNA methyltransferase RlmN.